A 202-amino-acid polypeptide reads, in one-letter code: Na(+)-translocating NADH-quinone reductase subunit E (202 aa).

The next 6 helical transmembrane spans lie at 11 to 31, 35 to 55, 79 to 99, 114 to 134, 144 to 164, and 180 to 200; these read AVFV…FIAI, VETA…TMPV, LSFL…QILE, GVFL…LFMV, TVYG…LAGI, and LGIT…FSGV.

Belongs to the NqrDE/RnfAE family. In terms of assembly, composed of six subunits; NqrA, NqrB, NqrC, NqrD, NqrE and NqrF.

It is found in the cell inner membrane. It catalyses the reaction a ubiquinone + n Na(+)(in) + NADH + H(+) = a ubiquinol + n Na(+)(out) + NAD(+). Functionally, NQR complex catalyzes the reduction of ubiquinone-1 to ubiquinol by two successive reactions, coupled with the transport of Na(+) ions from the cytoplasm to the periplasm. NqrA to NqrE are probably involved in the second step, the conversion of ubisemiquinone to ubiquinol. The sequence is that of Na(+)-translocating NADH-quinone reductase subunit E from Ectopseudomonas mendocina (strain ymp) (Pseudomonas mendocina).